The primary structure comprises 64 residues: Large ribosomal subunit protein bL32 (64 aa).

Residues 1–28 (MAVQKSRVTPSRRGQRRSHDALTAKKLS) form a disordered region.

It belongs to the bacterial ribosomal protein bL32 family.

In Xylella fastidiosa (strain 9a5c), this protein is Large ribosomal subunit protein bL32 (rpmF).